The sequence spans 84 residues: Metallothionein-like protein 2C (84 aa).

This sequence belongs to the metallothionein superfamily. Type 15 family.

Its subcellular location is the cytoplasm. The protein localises to the cytosol. Metallothioneins have a high content of cysteine residues that bind various heavy metals. Acts as a reactive oxygen species (ROS) scavenger in the cytosol. Possesses superoxide anion and hydroxyl radical scavenging activities in vitro. Plays a role during root development, lateral root initiation and seed embryo germination, possibly by regulating levels of cytokinin. The chain is Metallothionein-like protein 2C (MT2C) from Oryza sativa subsp. indica (Rice).